A 282-amino-acid polypeptide reads, in one-letter code: UDP-3-O-acyl-N-acetylglucosamine deacetylase (282 aa).

Histidine 81, histidine 239, and aspartate 243 together coordinate Zn(2+). Histidine 266 functions as the Proton donor in the catalytic mechanism.

This sequence belongs to the LpxC family. Zn(2+) serves as cofactor.

It carries out the reaction a UDP-3-O-[(3R)-3-hydroxyacyl]-N-acetyl-alpha-D-glucosamine + H2O = a UDP-3-O-[(3R)-3-hydroxyacyl]-alpha-D-glucosamine + acetate. Its pathway is glycolipid biosynthesis; lipid IV(A) biosynthesis; lipid IV(A) from (3R)-3-hydroxytetradecanoyl-[acyl-carrier-protein] and UDP-N-acetyl-alpha-D-glucosamine: step 2/6. Catalyzes the hydrolysis of UDP-3-O-myristoyl-N-acetylglucosamine to form UDP-3-O-myristoylglucosamine and acetate, the committed step in lipid A biosynthesis. The polypeptide is UDP-3-O-acyl-N-acetylglucosamine deacetylase (Chlamydia pneumoniae (Chlamydophila pneumoniae)).